The following is a 150-amino-acid chain: Transcriptional repressor NrdR (150 aa).

Residues 3-34 fold into a zinc finger; that stretch reads CPFCAFADSKVVDSRPDKGGSTIRRRRECESC. An ATP-cone domain is found at 49 to 139; sequence PLVIKKDGRR…VYRSFKDITE (91 aa).

This sequence belongs to the NrdR family. It depends on Zn(2+) as a cofactor.

Functionally, negatively regulates transcription of bacterial ribonucleotide reductase nrd genes and operons by binding to NrdR-boxes. The chain is Transcriptional repressor NrdR from Geotalea uraniireducens (strain Rf4) (Geobacter uraniireducens).